Here is a 190-residue protein sequence, read N- to C-terminus: Lysozyme g (190 aa).

Basic and acidic residues predominate over residues 1–10 (MPYGKIEDIK). The interval 1 to 31 (MPYGKIEDIKTSGASDVTAAQDGLKEGGWKS) is disordered. Catalysis depends on residues Glu71 and Asp84.

This sequence belongs to the glycosyl hydrolase 23 family.

It carries out the reaction Hydrolysis of (1-&gt;4)-beta-linkages between N-acetylmuramic acid and N-acetyl-D-glucosamine residues in a peptidoglycan and between N-acetyl-D-glucosamine residues in chitodextrins.. The protein is Lysozyme g of Takifugu rubripes (Japanese pufferfish).